The primary structure comprises 298 residues: 4-hydroxy-tetrahydrodipicolinate synthase (298 aa).

Threonine 45 provides a ligand contact to pyruvate. The active-site Proton donor/acceptor is tyrosine 133. Lysine 161 acts as the Schiff-base intermediate with substrate in catalysis. Isoleucine 203 is a binding site for pyruvate.

Belongs to the DapA family. Homotetramer; dimer of dimers.

The protein resides in the cytoplasm. The enzyme catalyses L-aspartate 4-semialdehyde + pyruvate = (2S,4S)-4-hydroxy-2,3,4,5-tetrahydrodipicolinate + H2O + H(+). Its pathway is amino-acid biosynthesis; L-lysine biosynthesis via DAP pathway; (S)-tetrahydrodipicolinate from L-aspartate: step 3/4. Functionally, catalyzes the condensation of (S)-aspartate-beta-semialdehyde [(S)-ASA] and pyruvate to 4-hydroxy-tetrahydrodipicolinate (HTPA). This Wigglesworthia glossinidia brevipalpis protein is 4-hydroxy-tetrahydrodipicolinate synthase.